The primary structure comprises 206 residues: Ribosomal RNA large subunit methyltransferase E (206 aa).

S-adenosyl-L-methionine is bound by residues glycine 60, tryptophan 62, aspartate 80, aspartate 96, and aspartate 121. Lysine 161 functions as the Proton acceptor in the catalytic mechanism.

This sequence belongs to the class I-like SAM-binding methyltransferase superfamily. RNA methyltransferase RlmE family.

It localises to the cytoplasm. It catalyses the reaction uridine(2552) in 23S rRNA + S-adenosyl-L-methionine = 2'-O-methyluridine(2552) in 23S rRNA + S-adenosyl-L-homocysteine + H(+). Specifically methylates the uridine in position 2552 of 23S rRNA at the 2'-O position of the ribose in the fully assembled 50S ribosomal subunit. The chain is Ribosomal RNA large subunit methyltransferase E from Legionella pneumophila (strain Corby).